Reading from the N-terminus, the 284-residue chain is 4-diphosphocytidyl-2-C-methyl-D-erythritol kinase (284 aa).

Lysine 14 is an active-site residue. 98-108 is a binding site for ATP; that stretch reads PMGGGLGGGSS. The active site involves aspartate 140.

Belongs to the GHMP kinase family. IspE subfamily.

It carries out the reaction 4-CDP-2-C-methyl-D-erythritol + ATP = 4-CDP-2-C-methyl-D-erythritol 2-phosphate + ADP + H(+). It participates in isoprenoid biosynthesis; isopentenyl diphosphate biosynthesis via DXP pathway; isopentenyl diphosphate from 1-deoxy-D-xylulose 5-phosphate: step 3/6. Catalyzes the phosphorylation of the position 2 hydroxy group of 4-diphosphocytidyl-2C-methyl-D-erythritol. In Shewanella sp. (strain ANA-3), this protein is 4-diphosphocytidyl-2-C-methyl-D-erythritol kinase.